A 305-amino-acid polypeptide reads, in one-letter code: Phosphatidate cytidylyltransferase (305 aa).

Transmembrane regions (helical) follow at residues 24–44, 97–117, 124–144, 151–171, 202–222, 232–252, and 277–297; these read LLVF…AFIV, PEHV…HLVF, LGPI…SVPI, LYGF…IFLI, TVVG…IFYS, IAMP…GFFG, and MLDV…ILLI.

Belongs to the CDS family.

The protein localises to the cell membrane. The catalysed reaction is a 1,2-diacyl-sn-glycero-3-phosphate + CTP + H(+) = a CDP-1,2-diacyl-sn-glycerol + diphosphate. It functions in the pathway phospholipid metabolism; CDP-diacylglycerol biosynthesis; CDP-diacylglycerol from sn-glycerol 3-phosphate: step 3/3. The polypeptide is Phosphatidate cytidylyltransferase (cdsA) (Chlamydia muridarum (strain MoPn / Nigg)).